A 472-amino-acid chain; its full sequence is Adenosylhomocysteinase (472 aa).

The substrate site is built by Thr64, Asp138, and Glu198. Position 199–201 (199–201 (TTT)) interacts with NAD(+). Residues Lys228 and Asp232 each contribute to the substrate site. NAD(+) contacts are provided by residues Asn233, 262–267 (GFGDVG), Glu285, Asn320, 341–343 (IGH), and Asn386.

This sequence belongs to the adenosylhomocysteinase family. NAD(+) serves as cofactor.

The protein resides in the cytoplasm. The enzyme catalyses S-adenosyl-L-homocysteine + H2O = L-homocysteine + adenosine. Its pathway is amino-acid biosynthesis; L-homocysteine biosynthesis; L-homocysteine from S-adenosyl-L-homocysteine: step 1/1. In terms of biological role, may play a key role in the regulation of the intracellular concentration of adenosylhomocysteine. The sequence is that of Adenosylhomocysteinase from Prochlorococcus marinus (strain MIT 9301).